The following is a 174-amino-acid chain: Crossover junction endodeoxyribonuclease RuvC (174 aa).

Residues aspartate 8, glutamate 68, and aspartate 140 contribute to the active site. Residues aspartate 8, glutamate 68, and aspartate 140 each contribute to the Mg(2+) site.

It belongs to the RuvC family. As to quaternary structure, homodimer which binds Holliday junction (HJ) DNA. The HJ becomes 2-fold symmetrical on binding to RuvC with unstacked arms; it has a different conformation from HJ DNA in complex with RuvA. In the full resolvosome a probable DNA-RuvA(4)-RuvB(12)-RuvC(2) complex forms which resolves the HJ. Mg(2+) serves as cofactor.

Its subcellular location is the cytoplasm. It catalyses the reaction Endonucleolytic cleavage at a junction such as a reciprocal single-stranded crossover between two homologous DNA duplexes (Holliday junction).. In terms of biological role, the RuvA-RuvB-RuvC complex processes Holliday junction (HJ) DNA during genetic recombination and DNA repair. Endonuclease that resolves HJ intermediates. Cleaves cruciform DNA by making single-stranded nicks across the HJ at symmetrical positions within the homologous arms, yielding a 5'-phosphate and a 3'-hydroxyl group; requires a central core of homology in the junction. The consensus cleavage sequence is 5'-(A/T)TT(C/G)-3'. Cleavage occurs on the 3'-side of the TT dinucleotide at the point of strand exchange. HJ branch migration catalyzed by RuvA-RuvB allows RuvC to scan DNA until it finds its consensus sequence, where it cleaves and resolves the cruciform DNA. This chain is Crossover junction endodeoxyribonuclease RuvC, found in Legionella pneumophila subsp. pneumophila (strain Philadelphia 1 / ATCC 33152 / DSM 7513).